The following is a 336-amino-acid chain: Immune-associated nucleotide-binding protein 6 (336 aa).

Residues 33 to 241 (EPVKNVVLVG…FTDTMHRRIQ (209 aa)) enclose the AIG1-type G domain. The interval 42-49 (GRTGNGKS) is G1. GTP is bound by residues 42 to 50 (GRTGNGKSA) and serine 63. A G2 region spans residues 69 to 73 (GVTTR). The interval 91-94 (DTPG) is G3. The tract at residues 161–164 (TCGD) is G4. Residues 200–202 (DNR) are G5. Asparagine 201 lines the GTP pocket. A coiled-coil region spans residues 237–270 (HRRIQEEAARVKREEKEIEEKNIADEEKAALKKQ).

Belongs to the TRAFAC class TrmE-Era-EngA-EngB-Septin-like GTPase superfamily. AIG1/Toc34/Toc159-like paraseptin GTPase family. IAN subfamily. In terms of tissue distribution, mostly expressed in pollen. Also detected in lateral roots and radicles.

This chain is Immune-associated nucleotide-binding protein 6, found in Arabidopsis thaliana (Mouse-ear cress).